Consider the following 932-residue polypeptide: Chitin synthase regulatory factor 3 (932 aa).

Positions 1–16 (MKDSHSSRRKYEKEKL) are enriched in basic and acidic residues. 3 disordered regions span residues 1-53 (MKDS…PTSR), 264-356 (TLEE…LQQP), and 374-406 (EVPA…NPTV). Composition is skewed to polar residues over residues 35–53 (SGNT…PTSR), 274–285 (DSITNTVSNASS), and 308–319 (SHFSSTDSNTDS). Residues 337 to 349 (KSSETLKNPRNDD) are compositionally biased toward basic and acidic residues. A Phosphoserine modification is found at S393. 7 Sel1-like repeats span residues 638–674 (PEAL…KKGH), 675–710 (PLSN…EMDV), 711–747 (VEAM…KSKG), 751–788 (VRAM…VYGY), 789–825 (AAAQ…EQDY), 826–863 (GEAE…CKGL), and 864–899 (AKAQ…KQGF). The interval 905-932 (RLEEQALSSKQTHSKAPKKKQQEQCVVM) is disordered.

This chain is Chitin synthase regulatory factor 3 (chr3), found in Schizosaccharomyces pombe (strain 972 / ATCC 24843) (Fission yeast).